Consider the following 210-residue polypeptide: MGAAKASLGRIFPESSILFLCDMQEKLRDRILYFPQIVSKAARMLKVAQMLEIPVLLTEHYPQGLGPTVPELGAQGLRTMSKTSFSMVPPLQQELDKLPQLQSVLLCGIETQGCILHTALDLLDRGLQVHVAVDACSSQSEMNRLVALARMQQSGVFLSTSEVLILQLVKDAAHPQFKEIQKILKEPVTDIGLLGFFQGKKNSLLPNSRT.

Lys178 carries the post-translational modification N6-succinyllysine.

This sequence belongs to the isochorismatase family. As to quaternary structure, interacts with CDKN2A. Ubiquitous. Expressed predominantly in uterus, stomach and urinary tract.

It localises to the cytoplasm. Its subcellular location is the nucleus. The protein is Isochorismatase domain-containing protein 2B (Isoc2b) of Mus musculus (Mouse).